We begin with the raw amino-acid sequence, 164 residues long: Type II secretion system protein M (164 aa).

Residues 1–17 (MNELRQRWQAMSQRERQ) are Cytoplasmic-facing. The helical transmembrane segment at 18–38 (LMVVCAAVLLLCVVYYAILQP) threads the bilayer. Topologically, residues 39–164 (WQEREDLWER…RLMLERTDEA (126 aa)) are periplasmic.

It belongs to the GSP M family. In terms of assembly, type II secretion system is composed of four main components: the outer membrane complex, the inner membrane complex, the cytoplasmic secretion ATPase and the periplasm-spanning pseudopilus. Forms homodimers. Interacts with OutL/GspL. Interacts with OutE/GspE and OutF/GspF.

The protein resides in the cell inner membrane. Inner membrane component of the type II secretion system required for the energy-dependent secretion of extracellular factors such as proteases and toxins from the periplasm. Plays a role in the complex assembly and recruits OutL resulting in a stable complex in the inner membrane. Provides thus a link between the energy-providing OutE protein in the cytoplasm and the rest of the T2SS machinery. This chain is Type II secretion system protein M (outM), found in Pectobacterium carotovorum subsp. carotovorum (Erwinia carotovora subsp. carotovora).